A 198-amino-acid chain; its full sequence is Nucleoid occlusion factor SlmA (198 aa).

Residues Asn-10 to Leu-70 enclose the HTH tetR-type domain. A DNA-binding region (H-T-H motif) is located at residues Thr-33–Phe-52. Residues Glu-117–Arg-144 are a coiled coil.

It belongs to the nucleoid occlusion factor SlmA family. In terms of assembly, homodimer. Interacts with FtsZ.

Its subcellular location is the cytoplasm. It localises to the nucleoid. Functionally, required for nucleoid occlusion (NO) phenomenon, which prevents Z-ring formation and cell division over the nucleoid. Acts as a DNA-associated cell division inhibitor that binds simultaneously chromosomal DNA and FtsZ, and disrupts the assembly of FtsZ polymers. SlmA-DNA-binding sequences (SBS) are dispersed on non-Ter regions of the chromosome, preventing FtsZ polymerization at these regions. This chain is Nucleoid occlusion factor SlmA, found in Salmonella dublin (strain CT_02021853).